The following is an 822-amino-acid chain: Outer dense fiber protein 2 (822 aa).

Residues 26-45 (KGQKTTPAKCQQKHKQKMKG) form a disordered region. Coiled-coil stretches lie at residues 113–418 (CKMN…EECA), 452–490 (DKSDLELEMVTVNSRIADLLEQQATLEDKMREDRDALMD), and 516–796 (MEEK…NYVQ).

The protein belongs to the ODF2 family. As to quaternary structure, self-associates. Associates with microtubules and forms a fibrillar structure partially linked to the microtubule network.

The protein resides in the cytoplasm. It localises to the cytoskeleton. Its subcellular location is the microtubule organizing center. It is found in the centrosome. The protein localises to the cell projection. The protein resides in the cilium. It localises to the centriole. Its subcellular location is the spindle pole. It is found in the flagellum. In terms of biological role, seems to be a major component of sperm tail outer dense fibers (ODF). ODFs are filamentous structures located on the outside of the axoneme in the midpiece and principal piece of the mammalian sperm tail and may help to maintain the passive elastic structures and elastic recoil of the sperm tail. This chain is Outer dense fiber protein 2 (ODF2), found in Gallus gallus (Chicken).